Reading from the N-terminus, the 205-residue chain is NADH-quinone oxidoreductase subunit C (205 aa).

Belongs to the complex I 30 kDa subunit family. NDH-1 is composed of 14 different subunits. Subunits NuoB, C, D, E, F, and G constitute the peripheral sector of the complex.

The protein localises to the cell inner membrane. It catalyses the reaction a quinone + NADH + 5 H(+)(in) = a quinol + NAD(+) + 4 H(+)(out). In terms of biological role, NDH-1 shuttles electrons from NADH, via FMN and iron-sulfur (Fe-S) centers, to quinones in the respiratory chain. The immediate electron acceptor for the enzyme in this species is believed to be ubiquinone. Couples the redox reaction to proton translocation (for every two electrons transferred, four hydrogen ions are translocated across the cytoplasmic membrane), and thus conserves the redox energy in a proton gradient. The polypeptide is NADH-quinone oxidoreductase subunit C (Bartonella bacilliformis (strain ATCC 35685 / KC583 / Herrer 020/F12,63)).